The sequence spans 457 residues: Argininosuccinate lyase (457 aa).

The protein belongs to the lyase 1 family. Argininosuccinate lyase subfamily.

The protein resides in the cytoplasm. The catalysed reaction is 2-(N(omega)-L-arginino)succinate = fumarate + L-arginine. Its pathway is amino-acid biosynthesis; L-arginine biosynthesis; L-arginine from L-ornithine and carbamoyl phosphate: step 3/3. The protein is Argininosuccinate lyase of Haemophilus influenzae (strain PittEE).